The primary structure comprises 598 residues: Phenylalanine--tRNA ligase beta subunit, cytoplasmic (598 aa).

A B5 domain is found at 303–383 (LAVYDMEVPL…IAYGFNNIPT (81 aa)). The Mg(2+) site is built by D361, D367, E370, and D371.

It belongs to the phenylalanyl-tRNA synthetase beta subunit family. Type 2 subfamily. In terms of assembly, tetramer of two alpha and two beta subunits. Mg(2+) is required as a cofactor.

The protein localises to the cytoplasm. It is found in the cytosol. It catalyses the reaction tRNA(Phe) + L-phenylalanine + ATP = L-phenylalanyl-tRNA(Phe) + AMP + diphosphate + H(+). This is Phenylalanine--tRNA ligase beta subunit, cytoplasmic from Arabidopsis thaliana (Mouse-ear cress).